The primary structure comprises 109 residues: Spermidine export protein MdtI (109 aa).

Transmembrane regions (helical) follow at residues 6–26, 35–55, 64–84, and 88–108; these read FYHI…NILL, VWLG…LAQA, AYAL…WILF, and LNYK…MIKL.

It belongs to the drug/metabolite transporter (DMT) superfamily. Small multidrug resistance (SMR) (TC 2.A.7.1) family. MdtI subfamily. Forms a complex with MdtJ.

The protein localises to the cell inner membrane. In terms of biological role, catalyzes the excretion of spermidine. The chain is Spermidine export protein MdtI from Yersinia enterocolitica serotype O:8 / biotype 1B (strain NCTC 13174 / 8081).